A 251-amino-acid polypeptide reads, in one-letter code: Probable transcriptional regulatory protein Cpar_0525 (251 aa).

Belongs to the TACO1 family.

Its subcellular location is the cytoplasm. This chain is Probable transcriptional regulatory protein Cpar_0525, found in Chlorobaculum parvum (strain DSM 263 / NCIMB 8327) (Chlorobium vibrioforme subsp. thiosulfatophilum).